The sequence spans 393 residues: uncharacterized protein (393 aa).

The disordered stretch occupies residues 164-183 (ASDPHPGKNSPASPTGENKE). Residues 173 to 183 (SPASPTGENKE) show a composition bias toward polar residues.

This is an uncharacterized protein from Treponema pallidum (strain Nichols).